A 644-amino-acid polypeptide reads, in one-letter code: Threonine--tRNA ligase (644 aa).

The 61-residue stretch at 1–61 (MPDIQLPDGS…DQDAEVAIVT (61 aa)) folds into the TGS domain. Positions 242–535 (DHRRIGTELE…LIEHYEGKFP (294 aa)) are catalytic. Residues Cys335, His386, and His512 each coordinate Zn(2+).

Belongs to the class-II aminoacyl-tRNA synthetase family. As to quaternary structure, homodimer. Requires Zn(2+) as cofactor.

The protein localises to the cytoplasm. The enzyme catalyses tRNA(Thr) + L-threonine + ATP = L-threonyl-tRNA(Thr) + AMP + diphosphate + H(+). In terms of biological role, catalyzes the attachment of threonine to tRNA(Thr) in a two-step reaction: L-threonine is first activated by ATP to form Thr-AMP and then transferred to the acceptor end of tRNA(Thr). Also edits incorrectly charged L-seryl-tRNA(Thr). This is Threonine--tRNA ligase from Acidithiobacillus ferrooxidans (strain ATCC 23270 / DSM 14882 / CIP 104768 / NCIMB 8455) (Ferrobacillus ferrooxidans (strain ATCC 23270)).